The following is a 117-amino-acid chain: Acidic phospholipase A2 (117 aa).

7 cysteine pairs are disulfide-bonded: cysteine 11–cysteine 70, cysteine 25–cysteine 116, cysteine 27–cysteine 43, cysteine 42–cysteine 98, cysteine 49–cysteine 91, cysteine 59–cysteine 84, and cysteine 77–cysteine 89. Residues tyrosine 26, glycine 28, and glycine 30 each contribute to the Ca(2+) site. The active site involves histidine 46. Aspartate 47 provides a ligand contact to Ca(2+). A glycan (N-linked (GlcNAc...) asparagine) is linked at asparagine 80. Aspartate 92 is an active-site residue.

It depends on Ca(2+) as a cofactor. As to expression, expressed by the venom gland.

Its subcellular location is the secreted. The enzyme catalyses a 1,2-diacyl-sn-glycero-3-phosphocholine + H2O = a 1-acyl-sn-glycero-3-phosphocholine + a fatty acid + H(+). Its function is as follows. Snake venom phospholipase A2 (PLA2) that shows strong myotoxicity and induces edema in mice. Shows no cytotoxicity in vitro. Has a strong anticoagulant effect in vitro. PLA2 catalyzes the calcium-dependent hydrolysis of the 2-acyl groups in 3-sn-phosphoglycerides. The sequence is that of Acidic phospholipase A2 from Micrurus dumerilii (Coral snake).